The sequence spans 31 residues: U8-ctenitoxin-Co1a (31 aa).

2 cysteine pairs are disulfide-bonded: Cys-4–Cys-18 and Cys-11–Cys-24.

In terms of tissue distribution, expressed by the venom gland.

Its subcellular location is the secreted. Functionally, blocks voltage-gated sodium channels (Nav). This chain is U8-ctenitoxin-Co1a, found in Ctenus ornatus (Brazilian spider).